A 124-amino-acid chain; its full sequence is Small ribosomal subunit protein uS13 (124 aa).

The tract at residues 94-124 is disordered; it reads KGLPVRGQRTKTNARTRKGPKRTVAGKKKAR.

This sequence belongs to the universal ribosomal protein uS13 family. As to quaternary structure, part of the 30S ribosomal subunit. Forms a loose heterodimer with protein S19. Forms two bridges to the 50S subunit in the 70S ribosome.

Its function is as follows. Located at the top of the head of the 30S subunit, it contacts several helices of the 16S rRNA. In the 70S ribosome it contacts the 23S rRNA (bridge B1a) and protein L5 of the 50S subunit (bridge B1b), connecting the 2 subunits; these bridges are implicated in subunit movement. Contacts the tRNAs in the A and P-sites. The polypeptide is Small ribosomal subunit protein uS13 (Pseudarthrobacter chlorophenolicus (strain ATCC 700700 / DSM 12829 / CIP 107037 / JCM 12360 / KCTC 9906 / NCIMB 13794 / A6) (Arthrobacter chlorophenolicus)).